Here is a 517-residue protein sequence, read N- to C-terminus: DNA-(apurinic or apyrimidinic site) endonuclease 2 (517 aa).

Mg(2+)-binding residues include Asn9 and Glu34. The Claspin-like CKB motif signature appears at 82-90 (EEGLSGVFC). The active site involves Tyr142. Residues Asp183, Asn185, Asp299, and His300 each coordinate Mg(2+). Asp183 serves as the catalytic Proton donor/acceptor. Catalysis depends on His300, which acts as the Proton acceptor. The segment covering 347-362 (GNTTEESSELTGTPSF) has biased composition (polar residues). Positions 347-366 (GNTTEESSELTGTPSFTEGA) are disordered. The short motif at 395-402 (QGNLLSFF) is the PCNA interacting protein (PIP) box element. Residues Cys463, His466, Cys489, and Cys503 each contribute to the Zn(2+) site. A GRF-type zinc finger spans residues 463–512 (CKGHSEPCVLRTVKKAGPNCGRQFYVCARPEGHSSNPQARCNFFLWLTKK).

The protein belongs to the DNA repair enzymes AP/ExoA family. In terms of assembly, interacts (via PIP box and GRF-type Zinc finger domain) with pcna; the interaction is required for 3 -5 SSB end resection, assembly of a checkpoint protein complex to SSB sites, and SSB signaling. Interacts with chek1. Mg(2+) is required as a cofactor. It depends on Mn(2+) as a cofactor. Expressed in eggs (at protein level).

The protein localises to the nucleus. Its subcellular location is the chromosome. It is found in the cytoplasm. The protein resides in the mitochondrion. It carries out the reaction Exonucleolytic cleavage in the 3'- to 5'-direction to yield nucleoside 5'-phosphates.. With respect to regulation, 3'-5' nuclease activity is stimulated in presence of pcna. Functionally, functions as a weak apurinic/apyrimidinic (AP) endodeoxyribonuclease in the DNA base excision repair (BER) pathway of DNA lesions induced by oxidative and alkylating agents. Initiates repair of AP sites in DNA by catalyzing hydrolytic incision of the phosphodiester backbone immediately adjacent to the damage, generating a single-strand break with 5'-deoxyribose phosphate and 3'-hydroxyl ends. Exhibits 3'-5' exonuclease activity on a 3' DNA substrate; nuclease activity is stimulated by interaction with pcna. Has a preference for the 3' recessed ends over blunt-ended substrates, in both the presence and the absence of pcna. Generates single-stranded DNA (ssDNA) via 3'-5' single-strand break (SSB) end resection, thereby promoting a DNA damage response via replication protein A (rpa2)-binding to ssDNA and the recruitment of a checkpoint protein complex, including atr, atr-interacting protein atrip, and rad9, to damage sites following oxidative stress. Plays a role in reversing blocked 3' DNA ends, problematic lesions that preclude DNA synthesis. Required for chek1 phosphorylation induced by hydrogen peroxide but not by stalled replication forks. This chain is DNA-(apurinic or apyrimidinic site) endonuclease 2, found in Xenopus laevis (African clawed frog).